A 293-amino-acid polypeptide reads, in one-letter code: tRNA (guanine(9)-N1)-methyltransferase (293 aa).

Residues 1–31 form a disordered region; it reads MSNDEINQNEEKVKRTPPLPPVPEGMSKKQW. A Phosphothreonine modification is found at Thr-16. The stretch at 32–61 forms a coiled coil; that stretch reads KKMCKRQRWEENKAKYNAERRVKKKRLRHE. The 197-residue stretch at 83–279 folds into the SAM-dependent MTase TRM10-type domain; that stretch reads EPRINVNQTD…SVLPPRKLDA (197 aa). Residues 186-187, Gly-206, 210-214, Cys-218, Leu-232, and 244-246 contribute to the S-adenosyl-L-methionine site; these read LT, DKNRY, and RVL. Residue Asp-210 is the Proton acceptor of the active site. A Phosphoserine modification is found at Ser-283.

It belongs to the class IV-like SAM-binding methyltransferase superfamily. TRM10 family. As to quaternary structure, monomer.

It is found in the cytoplasm. Its subcellular location is the nucleus. It catalyses the reaction guanosine(9) in tRNA + S-adenosyl-L-methionine = N(1)-methylguanosine(9) in tRNA + S-adenosyl-L-homocysteine + H(+). Its function is as follows. S-adenosyl-L-methionine-dependent guanine N(1)-methyltransferase that catalyzes the formation of N(1)-methylguanine at position 9 (m1G9) in cytoplasmic tRNAs. The chain is tRNA (guanine(9)-N1)-methyltransferase from Saccharomyces cerevisiae (strain ATCC 204508 / S288c) (Baker's yeast).